Consider the following 432-residue polypeptide: Histidine--tRNA ligase (432 aa).

It belongs to the class-II aminoacyl-tRNA synthetase family. In terms of assembly, homodimer.

It localises to the cytoplasm. It catalyses the reaction tRNA(His) + L-histidine + ATP = L-histidyl-tRNA(His) + AMP + diphosphate + H(+). The chain is Histidine--tRNA ligase from Symbiobacterium thermophilum (strain DSM 24528 / JCM 14929 / IAM 14863 / T).